Reading from the N-terminus, the 64-residue chain is Large ribosomal subunit protein bL35 (64 aa).

Positions 22-44 are disordered; the sequence is IMKQQAGMRHNLEVKSSKRKARL.

It belongs to the bacterial ribosomal protein bL35 family.

This chain is Large ribosomal subunit protein bL35, found in Clavibacter sepedonicus (Clavibacter michiganensis subsp. sepedonicus).